Consider the following 484-residue polypeptide: Sushi domain-containing protein 4 (484 aa).

The signal sequence occupies residues 1–35 (MFHHADKGGKKSAFGHPVCGQIILSIILLRPPLLV). 4 Sushi domains span residues 46–110 (QICK…VCLS), 111–168 (EDCL…QPTC), 169–230 (QGCL…RCLD), and 232–295 (EACS…YCVK). 8 disulfide bridges follow: C48/C90, C76/C108, C113/C156, C138/C168, C171/C215, C201/C228, C234/C280, and C265/C293. N-linked (GlcNAc...) asparagine glycosylation is found at N95 and N125. The N-linked (GlcNAc...) asparagine glycan is linked to N183. Residues 311 to 331 (WKVVACTATSVLLALLLVITA) traverse the membrane as a helical segment. The tract at residues 374 to 484 (SGNYCQPPND…PLVEDGEEDC (111 aa)) is disordered. 2 stretches are compositionally biased toward polar residues: residues 424–442 (DSLS…SSSH) and 449–467 (SEKT…TSPS). Residues 470 to 484 (IADEIPLVEDGEEDC) show a composition bias toward acidic residues.

The protein localises to the membrane. The chain is Sushi domain-containing protein 4 (susd4) from Danio rerio (Zebrafish).